The chain runs to 238 residues: Ribitol-5-phosphate cytidylyltransferase 2 (238 aa).

CTP is bound by residues 7-10 (LAGG) and 81-87 (GTDRNET).

Belongs to the IspD/TarI cytidylyltransferase family. TarI subfamily.

It catalyses the reaction D-ribitol 5-phosphate + CTP + H(+) = CDP-L-ribitol + diphosphate. It functions in the pathway cell wall biogenesis; poly(ribitol phosphate) teichoic acid biosynthesis. In terms of biological role, catalyzes the transfer of the cytidylyl group of CTP to D-ribitol 5-phosphate. The chain is Ribitol-5-phosphate cytidylyltransferase 2 from Staphylococcus aureus (strain MSSA476).